A 330-amino-acid chain; its full sequence is Trans-1,2-dihydrobenzene-1,2-diol dehydrogenase (330 aa).

This sequence belongs to the Gfo/Idh/MocA family. In terms of assembly, homodimer.

The catalysed reaction is (1R,2R)-1,2-dihydrobenzene-1,2-diol + NADP(+) = catechol + NADPH + H(+). It catalyses the reaction D-xylose + NADP(+) = D-xylono-1,5-lactone + NADPH + H(+). The chain is Trans-1,2-dihydrobenzene-1,2-diol dehydrogenase (dhdh) from Xenopus tropicalis (Western clawed frog).